A 245-amino-acid polypeptide reads, in one-letter code: tRNA1(Val) (adenine(37)-N6)-methyltransferase (245 aa).

Belongs to the methyltransferase superfamily. tRNA (adenine-N(6)-)-methyltransferase family.

Its subcellular location is the cytoplasm. It catalyses the reaction adenosine(37) in tRNA1(Val) + S-adenosyl-L-methionine = N(6)-methyladenosine(37) in tRNA1(Val) + S-adenosyl-L-homocysteine + H(+). Its function is as follows. Specifically methylates the adenine in position 37 of tRNA(1)(Val) (anticodon cmo5UAC). In Escherichia coli O7:K1 (strain IAI39 / ExPEC), this protein is tRNA1(Val) (adenine(37)-N6)-methyltransferase.